The sequence spans 247 residues: ATP synthase subunit a, chloroplastic (247 aa).

Transmembrane regions (helical) follow at residues 38 to 58 (QVLI…IIAV), 95 to 115 (VPFI…GALL), 134 to 154 (INTT…AGLS), 199 to 219 (LVVV…VMFL), and 220 to 240 (GLFT…AYIG).

Belongs to the ATPase A chain family. In terms of assembly, F-type ATPases have 2 components, CF(1) - the catalytic core - and CF(0) - the membrane proton channel. CF(1) has five subunits: alpha(3), beta(3), gamma(1), delta(1), epsilon(1). CF(0) has four main subunits: a, b, b' and c.

It localises to the plastid. Its subcellular location is the chloroplast thylakoid membrane. Key component of the proton channel; it plays a direct role in the translocation of protons across the membrane. This chain is ATP synthase subunit a, chloroplastic, found in Zea mays (Maize).